The sequence spans 786 residues: DNA ligase (786 aa).

NAD(+) contacts are provided by residues 32–36, 81–82, and Glu121; these read DAEYD and SL. Lys123 functions as the N6-AMP-lysine intermediate in the catalytic mechanism. NAD(+)-binding residues include Arg144, Glu181, Lys297, and Lys321. Positions 415, 418, 445, and 451 each coordinate Zn(2+). In terms of domain architecture, BRCT spans 703-786; the sequence is AEGLPLAGQT…EQLKSYGIEA (84 aa).

Belongs to the NAD-dependent DNA ligase family. LigA subfamily. It depends on Mg(2+) as a cofactor. Mn(2+) is required as a cofactor.

It catalyses the reaction NAD(+) + (deoxyribonucleotide)n-3'-hydroxyl + 5'-phospho-(deoxyribonucleotide)m = (deoxyribonucleotide)n+m + AMP + beta-nicotinamide D-nucleotide.. Its function is as follows. DNA ligase that catalyzes the formation of phosphodiester linkages between 5'-phosphoryl and 3'-hydroxyl groups in double-stranded DNA using NAD as a coenzyme and as the energy source for the reaction. It is essential for DNA replication and repair of damaged DNA. The protein is DNA ligase of Ectopseudomonas mendocina (strain ymp) (Pseudomonas mendocina).